Here is a 196-residue protein sequence, read N- to C-terminus: Large ribosomal subunit protein uL5 (196 aa).

This sequence belongs to the universal ribosomal protein uL5 family. Part of the 50S ribosomal subunit; part of the 5S rRNA/L5/L18/L25 subcomplex. Contacts the 5S rRNA and the P site tRNA. Forms a bridge to the 30S subunit in the 70S ribosome.

Its function is as follows. This is one of the proteins that bind and probably mediate the attachment of the 5S RNA into the large ribosomal subunit, where it forms part of the central protuberance. In the 70S ribosome it contacts protein S13 of the 30S subunit (bridge B1b), connecting the 2 subunits; this bridge is implicated in subunit movement. Contacts the P site tRNA; the 5S rRNA and some of its associated proteins might help stabilize positioning of ribosome-bound tRNAs. In Rhodopirellula baltica (strain DSM 10527 / NCIMB 13988 / SH1), this protein is Large ribosomal subunit protein uL5.